The following is a 204-amino-acid chain: Cytochrome P450 monooxygenase PC-23 (204 aa).

Cysteine 138 contributes to the heme binding site.

Belongs to the cytochrome P450 family. It depends on heme as a cofactor.

It functions in the pathway secondary metabolite biosynthesis. Functionally, cytochrome P450 monooxygenase; part of the gene cluster that mediates the biosynthesis of the indole diterpenes penitrems. The geranylgeranyl diphosphate (GGPP) synthase penG catalyzes the first step in penitrem biosynthesis via conversion of farnesyl pyrophosphate and isopentyl pyrophosphate into geranylgeranyl pyrophosphate (GGPP). Condensation of indole-3-glycerol phosphate with GGPP by the prenyl transferase penC then forms 3-geranylgeranylindole (3-GGI). Epoxidation by the FAD-dependent monooxygenase penM leads to a epoxidized-GGI that is substrate of the terpene cyclase penB for cyclization to yield paspaline. Paspaline is subsequently converted to 13-desoxypaxilline by the cytochrome P450 monooxygenase penP, the latter being then converted to paxilline by the cytochrome P450 monooxygenase penQ. Paxilline is converted to beta-paxitriol via C-10 ketoreduction by the short-chain dehydrogenase PC-15 which can be monoprenylated at the C-20 by the indole diterpene prenyltransferase penD. A two-step elimination (acetylation and elimination) process performed by the O-acetyltransferase PC-16 and the P.simplicissimum ptmI-ortholog not yet identified in P.crustosum, leads to the production of the prenylated form of penijanthine. The FAD-linked oxidoreductase ptmO then converts the prenylated form of penijanthine into PC-M5 which is in turn transformed into PC-M4 by the aromatic dimethylallyltransferase PC-22. A series of oxidation steps involving 4 cytochrome P450 monooxygenases (PC-21, PC-05, PC-23, PC-20) and a FAD-dependent monooxygenase (PC-14) are required for the transformation of PC-M4 to penitrems A and E. Synthesis of these final products is proposed to proceed via penitrems D and C (PC-21, PC-05, PC-14) and penitrems B and F (PC-21, PC-05, PC-14, PC-23). This Penicillium crustosum (Blue mold fungus) protein is Cytochrome P450 monooxygenase PC-23.